A 206-amino-acid polypeptide reads, in one-letter code: Large ribosomal subunit protein uL4 (206 aa).

Residues 44–87 (KRQGTHATKTRGMKRGGGAKPWRQKGTGRARAGSTRSPLWRGGG) are disordered.

It belongs to the universal ribosomal protein uL4 family. Part of the 50S ribosomal subunit.

Its function is as follows. One of the primary rRNA binding proteins, this protein initially binds near the 5'-end of the 23S rRNA. It is important during the early stages of 50S assembly. It makes multiple contacts with different domains of the 23S rRNA in the assembled 50S subunit and ribosome. In terms of biological role, forms part of the polypeptide exit tunnel. The protein is Large ribosomal subunit protein uL4 of Maridesulfovibrio salexigens (strain ATCC 14822 / DSM 2638 / NCIMB 8403 / VKM B-1763) (Desulfovibrio salexigens).